The chain runs to 230 residues: 5'-methylthioadenosine/S-adenosylhomocysteine nucleosidase (230 aa).

Glu12 serves as the catalytic Proton acceptor. Substrate-binding positions include Gly78, Ile152, and Met173–Glu174. Asp197 acts as the Proton donor in catalysis.

This sequence belongs to the PNP/UDP phosphorylase family. MtnN subfamily.

It catalyses the reaction S-adenosyl-L-homocysteine + H2O = S-(5-deoxy-D-ribos-5-yl)-L-homocysteine + adenine. The catalysed reaction is S-methyl-5'-thioadenosine + H2O = 5-(methylsulfanyl)-D-ribose + adenine. The enzyme catalyses 5'-deoxyadenosine + H2O = 5-deoxy-D-ribose + adenine. The protein operates within amino-acid biosynthesis; L-methionine biosynthesis via salvage pathway; S-methyl-5-thio-alpha-D-ribose 1-phosphate from S-methyl-5'-thioadenosine (hydrolase route): step 1/2. Functionally, catalyzes the irreversible cleavage of the glycosidic bond in both 5'-methylthioadenosine (MTA) and S-adenosylhomocysteine (SAH/AdoHcy) to adenine and the corresponding thioribose, 5'-methylthioribose and S-ribosylhomocysteine, respectively. Also cleaves 5'-deoxyadenosine, a toxic by-product of radical S-adenosylmethionine (SAM) enzymes, into 5-deoxyribose and adenine. The sequence is that of 5'-methylthioadenosine/S-adenosylhomocysteine nucleosidase from Haemophilus influenzae (strain 86-028NP).